Reading from the N-terminus, the 521-residue chain is MFS siderochrome iron transporter 1 (521 aa).

Over residues 1–10 (MDKTASLTSQ) the composition is skewed to polar residues. The interval 1 to 29 (MDKTASLTSQDAEKHDPDALRKERATDPP) is disordered. Residues 11-29 (DAEKHDPDALRKERATDPP) are compositionally biased toward basic and acidic residues. A run of 5 helical transmembrane segments spans residues 62 to 82 (WGLF…PLMG), 99 to 119 (FLSL…AFGC), 126 to 146 (WSFN…GGTQ), 148 to 168 (FVAL…NMPV), and 187 to 207 (ILSI…WPLI). N-linked (GlcNAc...) asparagine glycosylation occurs at Asn-209. A run of 6 helical transmembrane segments spans residues 229–249 (YLLF…FFVF), 330–350 (LAWS…ASTL), 379–399 (VIIA…VEQP), 404–424 (KGTL…TTTA), 431–451 (LGWN…LYAI), and 466–486 (GLTA…ALYA). The N-linked (GlcNAc...) asparagine glycan is linked to Asn-487. Residues 491-511 (AVPVYVSGALIIASGAMALLL) traverse the membrane as a helical segment.

It belongs to the major facilitator superfamily.

It localises to the membrane. Functionally, major facilitator transporter probably involved in siderophore basidioferrin transmembrane transport. The sequence is that of MFS siderochrome iron transporter 1 from Ceriporiopsis subvermispora (strain B) (White-rot fungus).